A 386-amino-acid chain; its full sequence is CUE domain-containing protein 1 (386 aa).

Over residues 1–10 (MTSLFRRSSS) the composition is skewed to low complexity. Residues 1–40 (MTSLFRRSSSGSGGGGTAGARGGGGGTAAPQELNNSRPAR) are disordered. A compositionally biased stretch (gly residues) spans 11 to 27 (GSGGGGTAGARGGGGGT). Positions 46–89 (EFNQAMDDFKTMFPNMDYDIIECVLRANSGAVDATIDQLLQMNL) constitute a CUE domain. 3 disordered regions span residues 147–172 (LAPP…RYRN), 195–225 (SIQG…DQES), and 367–386 (DFRG…REGQ). Residues 199–209 (NAGGPKPGSGE) show a composition bias toward gly residues.

The polypeptide is CUE domain-containing protein 1 (CUEDC1) (Homo sapiens (Human)).